We begin with the raw amino-acid sequence, 269 residues long: MRLEIENGLEFVCDPFLNERGKIFFLHAFTGNITNKLSFRTHFKDYSFYGINFPGHGNSVIHNQSELDFNFWIKLVQQFFNKYQLKNVVLFGHSIGGGLAIALTQVLTKEQIKGIILEAPLNPGIRATPPSIISALVPDTNEDFEAVQRALIYNIEQRFGANFKDFCAKQKQKMIQKYAPLKVMLQPEQAEQRLQLIDAAFKRLSYPTLWIHGQEDGIVRYLPSKAYLESLHNPLIELVGLSNTAHTTFFEQPQQFLQLVEQFLNKLNK.

Residue H27 is part of the active site. S94 (charge relay system) is an active-site residue.

This sequence belongs to the lipase/esterase LIP3/BchO family.

This Mycoplasma pneumoniae (strain ATCC 29342 / M129 / Subtype 1) (Mycoplasmoides pneumoniae) protein is Putative esterase/lipase 1.